Consider the following 179-residue polypeptide: Large ribosomal subunit protein uL5 (179 aa).

Belongs to the universal ribosomal protein uL5 family. In terms of assembly, part of the 50S ribosomal subunit; part of the 5S rRNA/L5/L18/L25 subcomplex. Contacts the 5S rRNA and the P site tRNA. Forms a bridge to the 30S subunit in the 70S ribosome.

This is one of the proteins that bind and probably mediate the attachment of the 5S RNA into the large ribosomal subunit, where it forms part of the central protuberance. In the 70S ribosome it contacts protein S13 of the 30S subunit (bridge B1b), connecting the 2 subunits; this bridge is implicated in subunit movement. Contacts the P site tRNA; the 5S rRNA and some of its associated proteins might help stabilize positioning of ribosome-bound tRNAs. The polypeptide is Large ribosomal subunit protein uL5 (Nitratidesulfovibrio vulgaris (strain DSM 19637 / Miyazaki F) (Desulfovibrio vulgaris)).